The sequence spans 411 residues: MNYGKKSPQLWAAIENEEQRQQDTIELIASENIVSDAVREAQGSVLTNKYAEGYPNKRYYGGCEFIDQVEQLAIDYAKKLFNAAYVNVQPHSGSQANMAVYQALLKPGDVILGMGMDAGGHLTHGATVNFSGKLYKTYGYGLNPDTEELDYDEIMALAKKVKPQLIVAGASAYSRIIDWQAFRKIADEVGAYLMVDMAHIAGLVATGTHPSPLPIADVVTTTTHKTLRGPRGGMILSKSTELGRKINSAVFPGIQGGPLEHVIAGKAQAFYEDLQPEYAEYIQQVVKNAQAMEKVFNTSKQIRVVSGKTENHLLVLDLTKTGLTGKDAQNLLDRVHITTNKEAIPNDPRSPFITSGLRIGTPAITSRGFKEEDAQKVAELISTALTNPTDEERLQEVAKGVHELTTKYPLN.

(6S)-5,6,7,8-tetrahydrofolate is bound at residue glycine 120–leucine 122. Lysine 225 is modified (N6-(pyridoxal phosphate)lysine). Serine 350–phenylalanine 352 is a binding site for (6S)-5,6,7,8-tetrahydrofolate.

The protein belongs to the SHMT family. In terms of assembly, homodimer. The cofactor is pyridoxal 5'-phosphate.

Its subcellular location is the cytoplasm. It carries out the reaction (6R)-5,10-methylene-5,6,7,8-tetrahydrofolate + glycine + H2O = (6S)-5,6,7,8-tetrahydrofolate + L-serine. Its pathway is one-carbon metabolism; tetrahydrofolate interconversion. The protein operates within amino-acid biosynthesis; glycine biosynthesis; glycine from L-serine: step 1/1. Catalyzes the reversible interconversion of serine and glycine with tetrahydrofolate (THF) serving as the one-carbon carrier. This reaction serves as the major source of one-carbon groups required for the biosynthesis of purines, thymidylate, methionine, and other important biomolecules. Also exhibits THF-independent aldolase activity toward beta-hydroxyamino acids, producing glycine and aldehydes, via a retro-aldol mechanism. The protein is Serine hydroxymethyltransferase of Limosilactobacillus reuteri (strain DSM 20016) (Lactobacillus reuteri).